The primary structure comprises 262 residues: Glucosamine-6-phosphate deaminase (262 aa).

D63 serves as the catalytic Proton acceptor; for enolization step. N129 serves as the catalytic For ring-opening step. H131 acts as the Proton acceptor; for ring-opening step in catalysis. The active-site For ring-opening step is E136.

It belongs to the glucosamine/galactosamine-6-phosphate isomerase family. NagB subfamily.

The catalysed reaction is alpha-D-glucosamine 6-phosphate + H2O = beta-D-fructose 6-phosphate + NH4(+). It functions in the pathway amino-sugar metabolism; N-acetylneuraminate degradation; D-fructose 6-phosphate from N-acetylneuraminate: step 5/5. Its function is as follows. Catalyzes the reversible isomerization-deamination of glucosamine 6-phosphate (GlcN6P) to form fructose 6-phosphate (Fru6P) and ammonium ion. The polypeptide is Glucosamine-6-phosphate deaminase (Bacillus cereus (strain B4264)).